Consider the following 435-residue polypeptide: MLCSSFSVSRLAIPAVCILIAFLAYTSQIFFLYFEDAPLKEDEVWRINILAICIWICYYRACTVDPGHVPKGWMPSDRERLKADRASGRQRWCRRCEAYKPPRAHHCKTCERCVPKMDHHCPWTSNCVSHFTFPHFARFLFYAVVGIAYLETRLWQRVSKVWGSRHLPSYLGPSMGQIGHLFVLFVTNSLTLFALSLLLLRTLWSLGSNTTTIESWEIERHETLLRRARRLGGSLPGPGGISVHITKQEFPYDIGIWSNIRAGMGGSANVLSWFWPLARTPDRSTGLEFEENGFEDPTVSWPPPDPDRIPLPPMDQRDSFMYDITDTSGTSGQIDIEAFNRRKEADLRRRRAPTEIERRKPFHVRLEEYSNGSSDAEADTGSDDDSDHGEEGWKNSEGERLRDFGVDEEAEFYDEEDIPLALLIQQRAKRQHLSQ.

Residues 1-10 are Cytoplasmic-facing; that stretch reads MLCSSFSVSR. A helical transmembrane segment spans residues 11–31; that stretch reads LAIPAVCILIAFLAYTSQIFF. Residues 32 to 48 are Lumenal-facing; sequence LYFEDAPLKEDEVWRIN. Residues 49-69 form a helical membrane-spanning segment; it reads ILAICIWICYYRACTVDPGHV. Over 70–129 the chain is Cytoplasmic; sequence PKGWMPSDRERLKADRASGRQRWCRRCEAYKPPRAHHCKTCERCVPKMDHHCPWTSNCVS. Residues 91–141 form the DHHC domain; sequence RWCRRCEAYKPPRAHHCKTCERCVPKMDHHCPWTSNCVSHFTFPHFARFLF. The S-palmitoyl cysteine intermediate role is filled by Cys-121. A helical membrane pass occupies residues 130-150; it reads HFTFPHFARFLFYAVVGIAYL. Topologically, residues 151-179 are lumenal; that stretch reads ETRLWQRVSKVWGSRHLPSYLGPSMGQIG. A helical transmembrane segment spans residues 180 to 200; the sequence is HLFVLFVTNSLTLFALSLLLL. Residues 201–435 are Cytoplasmic-facing; the sequence is RTLWSLGSNT…QRAKRQHLSQ (235 aa). Positions 359–368 are enriched in basic and acidic residues; sequence RKPFHVRLEE. The interval 359 to 408 is disordered; sequence RKPFHVRLEEYSNGSSDAEADTGSDDDSDHGEEGWKNSEGERLRDFGVDE. Residues 376-388 show a composition bias toward acidic residues; sequence AEADTGSDDDSDH. Over residues 389–405 the composition is skewed to basic and acidic residues; it reads GEEGWKNSEGERLRDFG.

Belongs to the DHHC palmitoyltransferase family. PFA4 subfamily.

Its subcellular location is the endoplasmic reticulum membrane. The catalysed reaction is L-cysteinyl-[protein] + hexadecanoyl-CoA = S-hexadecanoyl-L-cysteinyl-[protein] + CoA. Functionally, mediates the reversible addition of palmitate to target proteins, thereby regulating their membrane association and biological function. This is Palmitoyltransferase pfa4 from Emericella nidulans (strain FGSC A4 / ATCC 38163 / CBS 112.46 / NRRL 194 / M139) (Aspergillus nidulans).